The sequence spans 457 residues: MQKYTSEARQLLALAIPVILAQVAQTAMGFVDTVMAGGYSATDMAAVAIGTSIWLPAILFGHGLLLALTPVIAQLNGSGRRERIAHQVRQGFWLAGFVSVLVMIVLWNAGYIIRSMHNIDPALADKAVGYLRALLWGAPGYLFFQVARNQCEGLAKTKPGMVMGFLGLLVNIPVNYIFIYGHFGMPELGGIGCGVATAAVYWVMFIAMLSYIKHARSMRDIRNEKGFGKPDSVAMKRLIQLGLPIALALFFEVTLFAVVALLVSPLGIVDVAGHQIALNFSSLMFVLPMSLAAAVTIRVGYRLGQGSTLDAQTAARTGLGVGICMAVVTAIFTVTLRKHIALLYNDNPEVVALAAQLMLLAAVYQISDSIQVIGSGILRGYKDTRSIFFITFTAYWVLGLPSGYILALTDLVVDRMGPAGFWMGFIIGLTSAAVLMMLRMRYLQRQPSAIILQRAAR.

Transmembrane regions (helical) follow at residues 11 to 31 (LLAL…MGFV), 53 to 73 (IWLP…PVIA), 93 to 113 (WLAG…GYII), 127 to 147 (AVGY…FQVA), 160 to 180 (GMVM…IFIY), 188 to 208 (LGGI…FIAM), 243 to 263 (LPIA…ALLV), 276 to 296 (IALN…AAVT), 314 to 334 (AART…IFTV), 350 to 370 (VVAL…SDSI), 387 to 407 (IFFI…YILA), and 418 to 438 (PAGF…LMML).

This sequence belongs to the multi antimicrobial extrusion (MATE) (TC 2.A.66.1) family. MdtK subfamily.

The protein localises to the cell inner membrane. In terms of biological role, multidrug efflux pump that functions probably as a Na(+)/drug antiporter. This chain is Multidrug resistance protein MdtK, found in Salmonella heidelberg (strain SL476).